The primary structure comprises 90 residues: Probable Fe(2+)-trafficking protein (90 aa).

This sequence belongs to the Fe(2+)-trafficking protein family.

Functionally, could be a mediator in iron transactions between iron acquisition and iron-requiring processes, such as synthesis and/or repair of Fe-S clusters in biosynthetic enzymes. This chain is Probable Fe(2+)-trafficking protein, found in Coxiella burnetii (strain CbuK_Q154) (Coxiella burnetii (strain Q154)).